The following is a 164-amino-acid chain: Galectin-3 (164 aa).

One can recognise a Galectin domain in the interval 9-154 (STVDLSEPLK…FSDVLGVTVL (146 aa)). A carbohydrate-binding residues include N45, R64, N73, R81, E84, and N138.

As to quaternary structure, homotetramer. Oligomerization is required for carbohydrate binding.

Its subcellular location is the secreted. It localises to the extracellular space. The protein localises to the extracellular matrix. The protein resides in the cell wall. Binds complex carbohydrates, such as chitooligosaccharides. Does not bind lactose. May play a role in fruiting body formation. The protein is Galectin-3 (Cgl3) of Coprinopsis cinerea (Inky cap fungus).